Consider the following 76-residue polypeptide: Small ribosomal subunit protein bS18 (76 aa).

The protein belongs to the bacterial ribosomal protein bS18 family. Part of the 30S ribosomal subunit. Forms a tight heterodimer with protein bS6.

Binds as a heterodimer with protein bS6 to the central domain of the 16S rRNA, where it helps stabilize the platform of the 30S subunit. This Mesoplasma florum (strain ATCC 33453 / NBRC 100688 / NCTC 11704 / L1) (Acholeplasma florum) protein is Small ribosomal subunit protein bS18.